A 294-amino-acid chain; its full sequence is Bifunctional protein FolD (294 aa).

NADP(+) contacts are provided by residues 166-168 (GRS), Ser191, and Ile232.

This sequence belongs to the tetrahydrofolate dehydrogenase/cyclohydrolase family. As to quaternary structure, homodimer.

It carries out the reaction (6R)-5,10-methylene-5,6,7,8-tetrahydrofolate + NADP(+) = (6R)-5,10-methenyltetrahydrofolate + NADPH. The enzyme catalyses (6R)-5,10-methenyltetrahydrofolate + H2O = (6R)-10-formyltetrahydrofolate + H(+). Its pathway is one-carbon metabolism; tetrahydrofolate interconversion. In terms of biological role, catalyzes the oxidation of 5,10-methylenetetrahydrofolate to 5,10-methenyltetrahydrofolate and then the hydrolysis of 5,10-methenyltetrahydrofolate to 10-formyltetrahydrofolate. The chain is Bifunctional protein FolD from Afipia carboxidovorans (strain ATCC 49405 / DSM 1227 / KCTC 32145 / OM5) (Oligotropha carboxidovorans).